The sequence spans 183 residues: MKAYLALISAAVIGLAACSQEPAAPAAEATPAGEAPASEAPAAEAAPADAAEAPAAGNCAATVESNDNMQFNTKDIQVSKACKEFTITLKHTGTQPKASMGHNLVIAKAEDMDGVFKDGVGAADTDYVKPDDARVVAHTKLIGGGEESSLTLDPAKLADGDYKFACTFPGHGALMNGKVTLVD.

An N-terminal signal peptide occupies residues 1–17; it reads MKAYLALISAAVIGLAA. Residue Cys-18 is the site of N-palmitoyl cysteine attachment. Cys-18 carries S-diacylglycerol cysteine lipidation. The segment at 27–51 is disordered; it reads AEATPAGEAPASEAPAAEAAPADAA. Residues 57-183 form the Plastocyanin-like domain; it reads GNCAATVESN…LMNGKVTLVD (127 aa). Residues His-102, Cys-166, His-171, and Met-175 each contribute to the Cu cation site.

It depends on Cu cation as a cofactor.

The protein resides in the cell outer membrane. The protein is Outer membrane protein H.8 of Neisseria gonorrhoeae.